A 342-amino-acid chain; its full sequence is S-adenosylmethionine:tRNA ribosyltransferase-isomerase (342 aa).

The protein belongs to the QueA family. As to quaternary structure, monomer.

Its subcellular location is the cytoplasm. It carries out the reaction 7-aminomethyl-7-carbaguanosine(34) in tRNA + S-adenosyl-L-methionine = epoxyqueuosine(34) in tRNA + adenine + L-methionine + 2 H(+). The protein operates within tRNA modification; tRNA-queuosine biosynthesis. Transfers and isomerizes the ribose moiety from AdoMet to the 7-aminomethyl group of 7-deazaguanine (preQ1-tRNA) to give epoxyqueuosine (oQ-tRNA). This Geobacillus sp. (strain WCH70) protein is S-adenosylmethionine:tRNA ribosyltransferase-isomerase.